A 480-amino-acid polypeptide reads, in one-letter code: Aspartyl/glutamyl-tRNA(Asn/Gln) amidotransferase subunit B (480 aa).

It belongs to the GatB/GatE family. GatB subfamily. As to quaternary structure, heterotrimer of A, B and C subunits.

The catalysed reaction is L-glutamyl-tRNA(Gln) + L-glutamine + ATP + H2O = L-glutaminyl-tRNA(Gln) + L-glutamate + ADP + phosphate + H(+). It catalyses the reaction L-aspartyl-tRNA(Asn) + L-glutamine + ATP + H2O = L-asparaginyl-tRNA(Asn) + L-glutamate + ADP + phosphate + 2 H(+). In terms of biological role, allows the formation of correctly charged Asn-tRNA(Asn) or Gln-tRNA(Gln) through the transamidation of misacylated Asp-tRNA(Asn) or Glu-tRNA(Gln) in organisms which lack either or both of asparaginyl-tRNA or glutaminyl-tRNA synthetases. The reaction takes place in the presence of glutamine and ATP through an activated phospho-Asp-tRNA(Asn) or phospho-Glu-tRNA(Gln). This is Aspartyl/glutamyl-tRNA(Asn/Gln) amidotransferase subunit B from Streptococcus agalactiae serotype Ia (strain ATCC 27591 / A909 / CDC SS700).